Consider the following 617-residue polypeptide: Phenylalanine--tRNA ligase beta subunit (617 aa).

The 78-residue stretch at 306–383 folds into the B5 domain; it reads IQEKQINAQV…IGYGYDNLKK (78 aa). The Mg(2+) site is built by aspartate 361, aspartate 367, glutamate 370, and aspartate 371.

This sequence belongs to the phenylalanyl-tRNA synthetase beta subunit family. Type 2 subfamily. As to quaternary structure, tetramer of two alpha and two beta subunits. The cofactor is Mg(2+).

It is found in the cytoplasm. The catalysed reaction is tRNA(Phe) + L-phenylalanine + ATP = L-phenylalanyl-tRNA(Phe) + AMP + diphosphate + H(+). The polypeptide is Phenylalanine--tRNA ligase beta subunit (phesB) (Dictyostelium discoideum (Social amoeba)).